The chain runs to 39 residues: Potassium channel toxin alpha-KTx 2.23 (39 aa).

3 disulfide bridges follow: C7–C29, C13–C34, and C17–C36.

As to expression, expressed by the venom gland.

Its subcellular location is the secreted. In terms of biological role, blocks human voltage-gated potassium (Kv) channels Kv1.1/KCNA1, Kv1.2/KCNA2 and Kv1.3/KCNA3. The chain is Potassium channel toxin alpha-KTx 2.23 from Centruroides bonito (Scorpion).